Reading from the N-terminus, the 556-residue chain is 2-isopropylmalate synthase (556 aa).

In terms of domain architecture, Pyruvate carboxyltransferase spans Pro-33–Asp-307. 4 residues coordinate Mg(2+): Asp-42, His-246, His-248, and Asn-282. The interval Ala-439–Ala-556 is regulatory domain.

The protein belongs to the alpha-IPM synthase/homocitrate synthase family. LeuA type 2 subfamily. As to quaternary structure, homodimer. Requires Mg(2+) as cofactor.

Its subcellular location is the cytoplasm. The enzyme catalyses 3-methyl-2-oxobutanoate + acetyl-CoA + H2O = (2S)-2-isopropylmalate + CoA + H(+). The protein operates within amino-acid biosynthesis; L-leucine biosynthesis; L-leucine from 3-methyl-2-oxobutanoate: step 1/4. In terms of biological role, catalyzes the condensation of the acetyl group of acetyl-CoA with 3-methyl-2-oxobutanoate (2-ketoisovalerate) to form 3-carboxy-3-hydroxy-4-methylpentanoate (2-isopropylmalate). The sequence is that of 2-isopropylmalate synthase from Pseudomonas syringae pv. tomato (strain ATCC BAA-871 / DC3000).